The chain runs to 491 residues: UDP-N-acetylmuramate--L-alanine ligase (491 aa).

126–132 is an ATP binding site; that stretch reads GTHGKTT.

This sequence belongs to the MurCDEF family.

The protein resides in the cytoplasm. The catalysed reaction is UDP-N-acetyl-alpha-D-muramate + L-alanine + ATP = UDP-N-acetyl-alpha-D-muramoyl-L-alanine + ADP + phosphate + H(+). Its pathway is cell wall biogenesis; peptidoglycan biosynthesis. In terms of biological role, cell wall formation. This is UDP-N-acetylmuramate--L-alanine ligase from Shigella dysenteriae serotype 1 (strain Sd197).